The chain runs to 239 residues: Protein NtpR (239 aa).

One can recognise a Glutamine amidotransferase type-1 domain in the interval 12-239; that stretch reads LIRATDTFQG…GLFDFFVQEF (228 aa). Residue Cys-113 is the Nucleophile of the active site. Residues His-217 and Glu-219 contribute to the active site.

The polypeptide is Protein NtpR (ntpR) (Enterococcus hirae (strain ATCC 9790 / DSM 20160 / JCM 8729 / LMG 6399 / NBRC 3181 / NCIMB 6459 / NCDO 1258 / NCTC 12367 / WDCM 00089 / R)).